Reading from the N-terminus, the 275-residue chain is Elongation factor Ts (275 aa).

Positions 76-79 are involved in Mg(2+) ion dislocation from EF-Tu; that stretch reads TDFV.

It belongs to the EF-Ts family.

The protein resides in the cytoplasm. Functionally, associates with the EF-Tu.GDP complex and induces the exchange of GDP to GTP. It remains bound to the aminoacyl-tRNA.EF-Tu.GTP complex up to the GTP hydrolysis stage on the ribosome. This Nocardia farcinica (strain IFM 10152) protein is Elongation factor Ts.